Consider the following 435-residue polypeptide: Tol-Pal system protein TolB (435 aa).

Residues 1–20 (MRKIIAGVFIFVFLISNLYA) form the signal peptide.

This sequence belongs to the TolB family. In terms of assembly, the Tol-Pal system is composed of five core proteins: the inner membrane proteins TolA, TolQ and TolR, the periplasmic protein TolB and the outer membrane protein Pal. They form a network linking the inner and outer membranes and the peptidoglycan layer.

The protein localises to the periplasm. Part of the Tol-Pal system, which plays a role in outer membrane invagination during cell division and is important for maintaining outer membrane integrity. This is Tol-Pal system protein TolB from Francisella tularensis subsp. mediasiatica (strain FSC147).